A 94-amino-acid polypeptide reads, in one-letter code: Large ribosomal subunit protein bL25 (94 aa).

This sequence belongs to the bacterial ribosomal protein bL25 family. Part of the 50S ribosomal subunit; part of the 5S rRNA/L5/L18/L25 subcomplex. Contacts the 5S rRNA. Binds to the 5S rRNA independently of L5 and L18.

Functionally, this is one of the proteins that binds to the 5S RNA in the ribosome where it forms part of the central protuberance. The polypeptide is Large ribosomal subunit protein bL25 (Klebsiella pneumoniae (strain 342)).